Consider the following 358-residue polypeptide: Methylthioribose-1-phosphate isomerase (358 aa).

Substrate contacts are provided by residues 54–56 (CGA) and Q205. The Proton donor role is filled by D246. Substrate is bound at residue 256–257 (NQ).

Belongs to the eIF-2B alpha/beta/delta subunits family. MtnA subfamily.

The catalysed reaction is 5-(methylsulfanyl)-alpha-D-ribose 1-phosphate = 5-(methylsulfanyl)-D-ribulose 1-phosphate. The protein operates within amino-acid biosynthesis; L-methionine biosynthesis via salvage pathway; L-methionine from S-methyl-5-thio-alpha-D-ribose 1-phosphate: step 1/6. In terms of biological role, catalyzes the interconversion of methylthioribose-1-phosphate (MTR-1-P) into methylthioribulose-1-phosphate (MTRu-1-P). This is Methylthioribose-1-phosphate isomerase from Pseudomonas fluorescens (strain ATCC BAA-477 / NRRL B-23932 / Pf-5).